The primary structure comprises 304 residues: Acetyl-coenzyme A carboxylase carboxyl transferase subunit beta (304 aa).

The CoA carboxyltransferase N-terminal domain occupies Leu29–Ser298. Zn(2+) contacts are provided by Cys33, Cys36, Cys52, and Cys55. The C4-type zinc finger occupies Cys33 to Cys55.

Belongs to the AccD/PCCB family. In terms of assembly, acetyl-CoA carboxylase is a heterohexamer composed of biotin carboxyl carrier protein (AccB), biotin carboxylase (AccC) and two subunits each of ACCase subunit alpha (AccA) and ACCase subunit beta (AccD). Zn(2+) is required as a cofactor.

The protein resides in the cytoplasm. It carries out the reaction N(6)-carboxybiotinyl-L-lysyl-[protein] + acetyl-CoA = N(6)-biotinyl-L-lysyl-[protein] + malonyl-CoA. It functions in the pathway lipid metabolism; malonyl-CoA biosynthesis; malonyl-CoA from acetyl-CoA: step 1/1. Functionally, component of the acetyl coenzyme A carboxylase (ACC) complex. Biotin carboxylase (BC) catalyzes the carboxylation of biotin on its carrier protein (BCCP) and then the CO(2) group is transferred by the transcarboxylase to acetyl-CoA to form malonyl-CoA. This Gloeobacter violaceus (strain ATCC 29082 / PCC 7421) protein is Acetyl-coenzyme A carboxylase carboxyl transferase subunit beta.